The sequence spans 197 residues: Probable nicotinate-nucleotide adenylyltransferase (197 aa).

Belongs to the NadD family.

It catalyses the reaction nicotinate beta-D-ribonucleotide + ATP + H(+) = deamido-NAD(+) + diphosphate. Its pathway is cofactor biosynthesis; NAD(+) biosynthesis; deamido-NAD(+) from nicotinate D-ribonucleotide: step 1/1. Its function is as follows. Catalyzes the reversible adenylation of nicotinate mononucleotide (NaMN) to nicotinic acid adenine dinucleotide (NaAD). The polypeptide is Probable nicotinate-nucleotide adenylyltransferase (Bordetella pertussis (strain Tohama I / ATCC BAA-589 / NCTC 13251)).